Consider the following 123-residue polypeptide: Immunoglobulin lambda variable 9-49 (123 aa).

Positions 1–19 are cleaved as a signal peptide; sequence MAWAPLLLTLLSLLTGSLS. The interval 20-44 is framework-1; it reads QPVLTQPPSASASLGASVTLTCTLS. Residues 21 to 123 enclose the Ig-like domain; sequence PVLTQPPSAS…ADHGSGSNFV (103 aa). Cysteine 41 and cysteine 112 are oxidised to a cystine. Positions 45 to 51 are complementarity-determining-1; that stretch reads SGYSNYK. The segment at 52–68 is framework-2; it reads VDWYQQRPGKGPRFVMR. Residues 69 to 76 form a complementarity-determining-2 region; that stretch reads VGTGGIVG. Residues 77–112 form a framework-3 region; it reads SKGDGIPDRFSVLGSGLNRYLTIKNIQEEDESDYHC. Position 96 is a phosphotyrosine (tyrosine 96). Threonine 98 bears the Phosphothreonine mark. The interval 113–123 is complementarity-determining-3; sequence GADHGSGSNFV.

As to quaternary structure, immunoglobulins are composed of two identical heavy chains and two identical light chains; disulfide-linked.

It localises to the secreted. The protein localises to the cell membrane. In terms of biological role, v region of the variable domain of immunoglobulin light chains that participates in the antigen recognition. Immunoglobulins, also known as antibodies, are membrane-bound or secreted glycoproteins produced by B lymphocytes. In the recognition phase of humoral immunity, the membrane-bound immunoglobulins serve as receptors which, upon binding of a specific antigen, trigger the clonal expansion and differentiation of B lymphocytes into immunoglobulins-secreting plasma cells. Secreted immunoglobulins mediate the effector phase of humoral immunity, which results in the elimination of bound antigens. The antigen binding site is formed by the variable domain of one heavy chain, together with that of its associated light chain. Thus, each immunoglobulin has two antigen binding sites with remarkable affinity for a particular antigen. The variable domains are assembled by a process called V-(D)-J rearrangement and can then be subjected to somatic hypermutations which, after exposure to antigen and selection, allow affinity maturation for a particular antigen. This Homo sapiens (Human) protein is Immunoglobulin lambda variable 9-49.